A 609-amino-acid polypeptide reads, in one-letter code: Arginine--tRNA ligase (609 aa).

Residues 132-142 carry the 'HIGH' region motif; that stretch reads ANPTSSLHVGH.

It belongs to the class-I aminoacyl-tRNA synthetase family. As to quaternary structure, monomer.

The protein localises to the cytoplasm. The catalysed reaction is tRNA(Arg) + L-arginine + ATP = L-arginyl-tRNA(Arg) + AMP + diphosphate. The chain is Arginine--tRNA ligase from Psychrobacter sp. (strain PRwf-1).